Consider the following 185-residue polypeptide: NADH-dependent FMN reductase AsuE2 (185 aa).

Over residues 1–13 (MSTHTARRAGATA) the composition is skewed to low complexity. The segment at 1–24 (MSTHTARRAGATAGHDRDRGTEPG) is disordered. The segment covering 14-24 (GHDRDRGTEPG) has biased composition (basic and acidic residues).

This sequence belongs to the non-flavoprotein flavin reductase family. Does not interact with AsuE1, suggesting a possible transient interaction between the two enzymes instead of formation of a stable complex.

The catalysed reaction is FMNH2 + NAD(+) = FMN + NADH + 2 H(+). The protein operates within antibiotic biosynthesis. In terms of biological role, involved in the biosynthesis of the antibiotic asukamycin. When flavin concentration is low, AsuE2 assists the protoasukamycin 4-monooxygenase AsuE1 by providing a reduced form of flavin, enhancing AsuE1 activity. This chain is NADH-dependent FMN reductase AsuE2, found in Streptomyces nodosus subsp. asukaensis.